The chain runs to 68 residues: Small ribosomal subunit protein bS21 (68 aa).

This sequence belongs to the bacterial ribosomal protein bS21 family.

The protein is Small ribosomal subunit protein bS21 of Ruegeria pomeroyi (strain ATCC 700808 / DSM 15171 / DSS-3) (Silicibacter pomeroyi).